A 113-amino-acid polypeptide reads, in one-letter code: Large ribosomal subunit protein uL22 (113 aa).

Belongs to the universal ribosomal protein uL22 family. Part of the 50S ribosomal subunit.

Functionally, this protein binds specifically to 23S rRNA; its binding is stimulated by other ribosomal proteins, e.g. L4, L17, and L20. It is important during the early stages of 50S assembly. It makes multiple contacts with different domains of the 23S rRNA in the assembled 50S subunit and ribosome. Its function is as follows. The globular domain of the protein is located near the polypeptide exit tunnel on the outside of the subunit, while an extended beta-hairpin is found that lines the wall of the exit tunnel in the center of the 70S ribosome. The polypeptide is Large ribosomal subunit protein uL22 (Bacillus cereus (strain ATCC 10987 / NRS 248)).